Reading from the N-terminus, the 174-residue chain is Large ribosomal subunit protein uL10 (174 aa).

This sequence belongs to the universal ribosomal protein uL10 family. As to quaternary structure, part of the ribosomal stalk of the 50S ribosomal subunit. The N-terminus interacts with L11 and the large rRNA to form the base of the stalk. The C-terminus forms an elongated spine to which L12 dimers bind in a sequential fashion forming a multimeric L10(L12)X complex.

Functionally, forms part of the ribosomal stalk, playing a central role in the interaction of the ribosome with GTP-bound translation factors. The chain is Large ribosomal subunit protein uL10 from Bordetella bronchiseptica (strain ATCC BAA-588 / NCTC 13252 / RB50) (Alcaligenes bronchisepticus).